Here is a 428-residue protein sequence, read N- to C-terminus: 3-phosphoshikimate 1-carboxyvinyltransferase (428 aa).

3-phosphoshikimate is bound by residues Lys-23, Ser-24, and Arg-28. Lys-23 is a binding site for phosphoenolpyruvate. Residues Gly-97 and Arg-125 each contribute to the phosphoenolpyruvate site. The 3-phosphoshikimate site is built by Ser-170, Ser-171, Gln-172, Ser-198, Asp-314, Asn-337, and Lys-341. Gln-172 serves as a coordination point for phosphoenolpyruvate. The active-site Proton acceptor is the Asp-314. Arg-345, Arg-387, and Lys-412 together coordinate phosphoenolpyruvate.

This sequence belongs to the EPSP synthase family. Monomer.

The protein localises to the cytoplasm. It catalyses the reaction 3-phosphoshikimate + phosphoenolpyruvate = 5-O-(1-carboxyvinyl)-3-phosphoshikimate + phosphate. It participates in metabolic intermediate biosynthesis; chorismate biosynthesis; chorismate from D-erythrose 4-phosphate and phosphoenolpyruvate: step 6/7. In terms of biological role, catalyzes the transfer of the enolpyruvyl moiety of phosphoenolpyruvate (PEP) to the 5-hydroxyl of shikimate-3-phosphate (S3P) to produce enolpyruvyl shikimate-3-phosphate and inorganic phosphate. The chain is 3-phosphoshikimate 1-carboxyvinyltransferase from Cronobacter sakazakii (strain ATCC BAA-894) (Enterobacter sakazakii).